Here is a 489-residue protein sequence, read N- to C-terminus: Rhamnulokinase (489 aa).

Position 13 to 17 (13 to 17 (ASSGR)) interacts with ATP. Cysteine 68 and cysteine 222 are oxidised to a cystine. Substrate is bound by residues glycine 83 and 236–238 (HDT). The active-site Proton acceptor is aspartate 237. Threonine 259 is an ATP binding site. Residue asparagine 296 coordinates substrate. Glutamine 304 contributes to the ATP binding site. Cysteine 353 and cysteine 370 are joined by a disulfide. Position 402 (glycine 402) interacts with ATP. Cysteines 413 and 417 form a disulfide.

The protein belongs to the rhamnulokinase family. It depends on Mg(2+) as a cofactor.

The enzyme catalyses L-rhamnulose + ATP = L-rhamnulose 1-phosphate + ADP + H(+). It participates in carbohydrate degradation; L-rhamnose degradation; glycerone phosphate from L-rhamnose: step 2/3. Involved in the catabolism of L-rhamnose (6-deoxy-L-mannose). Catalyzes the transfer of the gamma-phosphate group from ATP to the 1-hydroxyl group of L-rhamnulose to yield L-rhamnulose 1-phosphate. This Salmonella choleraesuis (strain SC-B67) protein is Rhamnulokinase.